The primary structure comprises 75 residues: MDIITLAEVAGNLSVIGYGIGTLGPGIGLGILFGKAMESTARQPEMSGKIQTIMFIGLALVEVLALIGFVAALII.

2 helical membrane-spanning segments follow: residues 13 to 33 (LSVI…GILF) and 55 to 75 (FIGL…ALII).

Belongs to the ATPase C chain family. F-type ATPases have 2 components, F(1) - the catalytic core - and F(0) - the membrane proton channel. F(1) has five subunits: alpha(3), beta(3), gamma(1), delta(1), epsilon(1). F(0) has three main subunits: a(1), b(2) and c(10-14). The alpha and beta chains form an alternating ring which encloses part of the gamma chain. F(1) is attached to F(0) by a central stalk formed by the gamma and epsilon chains, while a peripheral stalk is formed by the delta and b chains.

It is found in the cell membrane. Functionally, f(1)F(0) ATP synthase produces ATP from ADP in the presence of a proton or sodium gradient. F-type ATPases consist of two structural domains, F(1) containing the extramembraneous catalytic core and F(0) containing the membrane proton channel, linked together by a central stalk and a peripheral stalk. During catalysis, ATP synthesis in the catalytic domain of F(1) is coupled via a rotary mechanism of the central stalk subunits to proton translocation. In terms of biological role, key component of the F(0) channel; it plays a direct role in translocation across the membrane. A homomeric c-ring of between 10-14 subunits forms the central stalk rotor element with the F(1) delta and epsilon subunits. The protein is ATP synthase subunit c of Bifidobacterium longum (strain DJO10A).